The sequence spans 250 residues: 6-phosphogluconate dehydrogenase, decarboxylating (250 aa).

Lys-29 and Arg-56 together coordinate substrate. Lys-77 carries the post-translational modification N6-acetyllysine. Substrate contacts are provided by Arg-214 and His-220. 245–248 contributes to the NADP(+) binding site; it reads SSSY.

The protein belongs to the 6-phosphogluconate dehydrogenase family. Homodimer.

It localises to the cytoplasm. The enzyme catalyses 6-phospho-D-gluconate + NADP(+) = D-ribulose 5-phosphate + CO2 + NADPH. It participates in carbohydrate degradation; pentose phosphate pathway; D-ribulose 5-phosphate from D-glucose 6-phosphate (oxidative stage): step 3/3. In terms of biological role, catalyzes the oxidative decarboxylation of 6-phosphogluconate to ribulose 5-phosphate and CO(2), with concomitant reduction of NADP to NADPH. This is 6-phosphogluconate dehydrogenase, decarboxylating (PGD) from Sus scrofa (Pig).